The chain runs to 332 residues: Anthranilate phosphoribosyltransferase (332 aa).

Residues Gly-79, 82-83, Thr-87, 89-92, 107-115, and Ala-119 contribute to the 5-phospho-alpha-D-ribose 1-diphosphate site; these read GD, NIST, and KHGNYGATS. Residue Gly-79 coordinates anthranilate. Ser-91 serves as a coordination point for Mg(2+). Asn-110 provides a ligand contact to anthranilate. Arg-165 lines the anthranilate pocket. Mg(2+)-binding residues include Asp-223 and Glu-224.

The protein belongs to the anthranilate phosphoribosyltransferase family. As to quaternary structure, homodimer. Mg(2+) serves as cofactor.

The enzyme catalyses N-(5-phospho-beta-D-ribosyl)anthranilate + diphosphate = 5-phospho-alpha-D-ribose 1-diphosphate + anthranilate. It functions in the pathway amino-acid biosynthesis; L-tryptophan biosynthesis; L-tryptophan from chorismate: step 2/5. Catalyzes the transfer of the phosphoribosyl group of 5-phosphorylribose-1-pyrophosphate (PRPP) to anthranilate to yield N-(5'-phosphoribosyl)-anthranilate (PRA). The sequence is that of Anthranilate phosphoribosyltransferase from Bacteroides thetaiotaomicron (strain ATCC 29148 / DSM 2079 / JCM 5827 / CCUG 10774 / NCTC 10582 / VPI-5482 / E50).